The sequence spans 699 residues: MSKINKLEHIRNIGICAHIDAGKTTTTERILYYTGKSHKIGEVHEGGATMDWMEQEQERGITITSAATTCRWQDKIINIIDTPGHVDFTIEVERSLRVLDGAVAVFDGVAGVEPQSETVWRQADKYNVPRMCFVNKMDRMGADFYRCVEMIKDRLGAKPLVIQLPVGIEENFKGIIDLVKMKAVIWKDESLGAKYFEEHIPADMKDKAEEYRAKLLDMVVELDDHVMEKYLSGEEVTEEEIKILIRNGTISAAFYPVLCGSAFKNKGVQPLLDAVVDFLPSPIDIGIVKGMEVNTGEEKDFPISITEPFSALAFKIMNDPFVGSLTFIRIYSGKITSGASVINTVKNKREKIGRMLLMHANNREDIKEASAGDIVALAGLKDTSTGDTLSDIDTQVVLERMEFPEPVIELAVEPKSTADQEKMGLALSRLAAEDPSFRVSTDHETGQTVIKGMGELHLEIIIDRMRREFKVEANIGVPQVAYRETITKACEIDYTHKKQSGGAGQFARVKIIFEPLKEVKDLKDEDKNKTFVFESKIVGGAVPKEYIPGVEKGLNNIRETGVIAGYPMIDFKATLVDGAFHDVDSSVLAFEIAAKAAFREGMPKGNPKLLEPIMKVEVITPDEYMGDIIGDLNSRRGQIQSMDPRGNAQVVTANVPLAEMFGYVNMLRSLSQGRAQFSMIFSHYDQVPSQVADIIKAKK.

The tr-type G domain maps to 8–283; sequence EHIRNIGICA…AVVDFLPSPI (276 aa). Residues 17–24, 81–85, and 135–138 contribute to the GTP site; these read AHIDAGKT, DTPGH, and NKMD.

Belongs to the TRAFAC class translation factor GTPase superfamily. Classic translation factor GTPase family. EF-G/EF-2 subfamily.

The protein localises to the cytoplasm. Its function is as follows. Catalyzes the GTP-dependent ribosomal translocation step during translation elongation. During this step, the ribosome changes from the pre-translocational (PRE) to the post-translocational (POST) state as the newly formed A-site-bound peptidyl-tRNA and P-site-bound deacylated tRNA move to the P and E sites, respectively. Catalyzes the coordinated movement of the two tRNA molecules, the mRNA and conformational changes in the ribosome. The chain is Elongation factor G from Rickettsia helvetica.